The chain runs to 231 residues: Large ribosomal subunit protein uL1 (231 aa).

This sequence belongs to the universal ribosomal protein uL1 family. As to quaternary structure, part of the 50S ribosomal subunit.

Its function is as follows. Binds directly to 23S rRNA. The L1 stalk is quite mobile in the ribosome, and is involved in E site tRNA release. In terms of biological role, protein L1 is also a translational repressor protein, it controls the translation of the L11 operon by binding to its mRNA. This chain is Large ribosomal subunit protein uL1, found in Acidovorax ebreus (strain TPSY) (Diaphorobacter sp. (strain TPSY)).